The primary structure comprises 696 residues: Polyribonucleotide nucleotidyltransferase (696 aa).

Positions 486 and 492 each coordinate Mg(2+). One can recognise a KH domain in the interval 553–612; it reads PRIIVRNIPKDRIGELIGPGGKNVRGISELTGAELYIEDDGRVTISGSNQESAEKAAKMV. Positions 622–690 constitute an S1 motif domain; it reads GKIYEGKVKR…KTGKIDLSRK (69 aa).

Belongs to the polyribonucleotide nucleotidyltransferase family. Mg(2+) is required as a cofactor.

The protein resides in the cytoplasm. It catalyses the reaction RNA(n+1) + phosphate = RNA(n) + a ribonucleoside 5'-diphosphate. Its function is as follows. Involved in mRNA degradation. Catalyzes the phosphorolysis of single-stranded polyribonucleotides processively in the 3'- to 5'-direction. The protein is Polyribonucleotide nucleotidyltransferase of Leptospira borgpetersenii serovar Hardjo-bovis (strain L550).